We begin with the raw amino-acid sequence, 100 residues long: Urease subunit gamma (100 aa).

The protein belongs to the urease gamma subunit family. In terms of assembly, heterotrimer of UreA (gamma), UreB (beta) and UreC (alpha) subunits. Three heterotrimers associate to form the active enzyme.

The protein resides in the cytoplasm. The catalysed reaction is urea + 2 H2O + H(+) = hydrogencarbonate + 2 NH4(+). It participates in nitrogen metabolism; urea degradation; CO(2) and NH(3) from urea (urease route): step 1/1. The polypeptide is Urease subunit gamma (Bacillus cereus (strain ATCC 10987 / NRS 248)).